The chain runs to 170 residues: Urease accessory protein UreE (170 aa).

Residues 137 to 170 (PFDPESGAYAHAGREQSHAHSHEHSHADGHTHAH) are disordered. Residues 148–170 (AGREQSHAHSHEHSHADGHTHAH) are compositionally biased toward basic and acidic residues.

Belongs to the UreE family.

Its subcellular location is the cytoplasm. Functionally, involved in urease metallocenter assembly. Binds nickel. Probably functions as a nickel donor during metallocenter assembly. The chain is Urease accessory protein UreE from Pseudoalteromonas translucida (strain TAC 125).